The sequence spans 429 residues: Probable M18 family aminopeptidase 2 (429 aa).

His-82, His-156, and His-401 together coordinate Zn(2+).

This sequence belongs to the peptidase M18 family. It depends on Zn(2+) as a cofactor.

The polypeptide is Probable M18 family aminopeptidase 2 (Pseudomonas putida (strain ATCC 700007 / DSM 6899 / JCM 31910 / BCRC 17059 / LMG 24140 / F1)).